The sequence spans 140 residues: UPF0251 protein Athe_2281 (140 aa).

The protein belongs to the UPF0251 family.

The protein is UPF0251 protein Athe_2281 of Caldicellulosiruptor bescii (strain ATCC BAA-1888 / DSM 6725 / KCTC 15123 / Z-1320) (Anaerocellum thermophilum).